A 263-amino-acid polypeptide reads, in one-letter code: Hydroxyethylthiazole kinase (263 aa).

Residue methionine 41 coordinates substrate. Arginine 117 and serine 163 together coordinate ATP. Glycine 190 provides a ligand contact to substrate.

This sequence belongs to the Thz kinase family. The cofactor is Mg(2+).

It catalyses the reaction 5-(2-hydroxyethyl)-4-methylthiazole + ATP = 4-methyl-5-(2-phosphooxyethyl)-thiazole + ADP + H(+). It participates in cofactor biosynthesis; thiamine diphosphate biosynthesis; 4-methyl-5-(2-phosphoethyl)-thiazole from 5-(2-hydroxyethyl)-4-methylthiazole: step 1/1. Functionally, catalyzes the phosphorylation of the hydroxyl group of 4-methyl-5-beta-hydroxyethylthiazole (THZ). In Lactiplantibacillus plantarum (strain ATCC BAA-793 / NCIMB 8826 / WCFS1) (Lactobacillus plantarum), this protein is Hydroxyethylthiazole kinase.